Here is a 475-residue protein sequence, read N- to C-terminus: MSKEIKAQVVVLGSGPAGYSAAFRCADLGLETVLVERYSTLGGVCLNVGCIPSKALLHVSKVIEEAKAMADHGVVFGEPQTDINKIRIWKEKVVNQLTGGLSGMAKMRNVTVVNGYGKFTGPNSILVEGEGESTVVNFDNAIVAAGSRPIKLPFIPHEDPRIWDSTDALELKEVPEKLLIMGGGIIGLEMGTVYHSLGSKVEVVEMFDQVIPAADKDIVKVYTKRIKDKFKLMLETKVTAVEAKEDGIYVSMEGKKAPAEAERYDAVLVAIGRVPNGKLIDGEKAGLEIDERGFINVDKQMRTNVPHIFAIGDIVGQPMLAHKGVHEGHVAAEVISGKKHYFDPKVIPSIAYTEPEVAWVGKTEKEAKAEGIKYEVATFPWAASGRAIASDCSDGMTKLIFDKETHRVIGGAIVGTNGGELLGEIGLAIEMGCDAEDIALTIHAHPTLHESVGLAAEVFEGSITDLPNKKAVKKK.

FAD-binding positions include 36–45, Lys-54, and Gly-117; that span reads ERYSTLGGVC. A disulfide bond links Cys-45 and Cys-50. NAD(+) contacts are provided by residues 182-186, Glu-205, Val-238, and 270-273; these read GGGII and AIGR. The FAD site is built by Asp-313 and Ala-321. His-445 functions as the Proton acceptor in the catalytic mechanism.

The protein belongs to the class-I pyridine nucleotide-disulfide oxidoreductase family. FAD is required as a cofactor.

It is found in the cytoplasm. It catalyses the reaction N(6)-[(R)-dihydrolipoyl]-L-lysyl-[protein] + NAD(+) = N(6)-[(R)-lipoyl]-L-lysyl-[protein] + NADH + H(+). Functionally, the branched-chain alpha-keto dehydrogenase complex catalyzes the overall conversion of alpha-keto acids to acyl-CoA and CO(2). It contains multiple copies of 3 enzymatic components: branched-chain alpha-keto acid decarboxylase (E1), lipoamide acyltransferase (E2) and lipoamide dehydrogenase (E3). This Vibrio parahaemolyticus serotype O3:K6 (strain RIMD 2210633) protein is Dihydrolipoyl dehydrogenase (lpd).